Consider the following 320-residue polypeptide: Malate dehydrogenase (320 aa).

Residues 10-15 (GAGQIG) and aspartate 34 contribute to the NAD(+) site. 2 residues coordinate substrate: arginine 83 and arginine 89. NAD(+) contacts are provided by residues asparagine 96 and 119–121 (ITN). Residues asparagine 121 and arginine 152 each contribute to the substrate site. The active-site Proton acceptor is histidine 176.

The protein belongs to the LDH/MDH superfamily. MDH type 3 family.

It carries out the reaction (S)-malate + NAD(+) = oxaloacetate + NADH + H(+). Its function is as follows. Catalyzes the reversible oxidation of malate to oxaloacetate. The polypeptide is Malate dehydrogenase (Cereibacter sphaeroides (strain ATCC 17025 / ATH 2.4.3) (Rhodobacter sphaeroides)).